Here is a 221-residue protein sequence, read N- to C-terminus: Probable molybdenum cofactor guanylyltransferase (221 aa).

Residues 17–19 (LAG), Lys29, Asp74, and Asp103 contribute to the GTP site. Asp103 lines the Mg(2+) pocket.

Belongs to the MobA family. It depends on Mg(2+) as a cofactor.

Its subcellular location is the cytoplasm. It carries out the reaction Mo-molybdopterin + GTP + H(+) = Mo-molybdopterin guanine dinucleotide + diphosphate. Its function is as follows. Transfers a GMP moiety from GTP to Mo-molybdopterin (Mo-MPT) cofactor (Moco or molybdenum cofactor) to form Mo-molybdopterin guanine dinucleotide (Mo-MGD) cofactor. This Peptoclostridium acidaminophilum (Eubacterium acidaminophilum) protein is Probable molybdenum cofactor guanylyltransferase.